Reading from the N-terminus, the 320-residue chain is Short-chain dehydrogenase/reductase ATR7 (320 aa).

NADP(+) contacts are provided by serine 32, isoleucine 34, glutamine 55, aspartate 70, asparagine 93, lysine 134, tyrosine 167, lysine 171, and threonine 202. Tyrosine 167 (proton acceptor) is an active-site residue. Lysine 171 functions as the Lowers pKa of active site Tyr in the catalytic mechanism.

This sequence belongs to the short-chain dehydrogenases/reductases (SDR) family.

It functions in the pathway mycotoxin biosynthesis. Its function is as follows. Short-chain dehydrogenase/reductase; part of the core atranone cluster (CAC) which products are predicted to catalyze most or all steps of mycotoxin atranone synthesis, starting from geranylgeranyl pyrophosphate (GGPP). The initial cyclization of GGPP to dolabellane is probably performed by the terpene cyclase ATR13. The Baeyer-Villiger oxidation near the end of the atranone synthesis, which converts atranones D and E to atranones F and G is predicted to be catalyzed by the monooxygenase ATR8. Of the CAC's other predicted gene products, the reducing PKS ATR6 might synthesize a polyketide chain. This polyketide is probably transferred onto the atranone backbone by the polyketide transferase ATR5. Other predicted CAC products include 4 oxygenases (ATR2, ATR3, ATR4, and ATR14), 3 short-chain reductases (ATR7, ATR9, and ATR10), and a methyltransferase (ATR12). These may all be involved in the various steps of atranone biosynthesis, although their specific roles must await experimental determination. The protein is Short-chain dehydrogenase/reductase ATR7 of Stachybotrys chlorohalonatus (strain IBT 40285).